The sequence spans 409 residues: Shaggy-related protein kinase NtK-1 (409 aa).

Positions 1-27 (MTSVGLAPVSGLRESSSHSVGVDRLPE) are disordered. Positions 73–357 (YMAERIVGQG…ALEAVTHAFF (285 aa)) constitute a Protein kinase domain. ATP contacts are provided by residues 79-87 (VGQGSFGVV) and Lys102. Asp198 functions as the Proton acceptor in the catalytic mechanism.

The protein belongs to the protein kinase superfamily. CMGC Ser/Thr protein kinase family. GSK-3 subfamily. In terms of processing, autophosphorylated mainly on threonine and serine residues.

It carries out the reaction L-seryl-[protein] + ATP = O-phospho-L-seryl-[protein] + ADP + H(+). The enzyme catalyses L-threonyl-[protein] + ATP = O-phospho-L-threonyl-[protein] + ADP + H(+). In terms of biological role, may mediate extracellular signals to regulate transcription in differentiating cells. This chain is Shaggy-related protein kinase NtK-1 (NTK-1), found in Nicotiana tabacum (Common tobacco).